Consider the following 221-residue polypeptide: Carotenogenesis protein CarR (221 aa).

6 helical membrane-spanning segments follow: residues 56 to 76 (LGLLAAVVLLAVGAVTGPLLL), 79 to 99 (APLLAMLVGTSAVCAWGALSP), 107 to 127 (LGVGLAVVSAAALVLARGAPH), 136 to 156 (VCTVSHLAIGVVPLVVALFAL), 166 to 186 (AVVAGLSVGSTGALLGELACE), and 191 to 211 (HVLSHHLLAWVVITVVLVVIS).

It is found in the cell inner membrane. Its function is as follows. Negative regulator of the carotenoid synthesis regulon. It is probably inactivated by protoporphyrin IX in the presence of blue light. Inactivation of CarR leads to loss of negative control over the carotenogenesis protein CarQ. The polypeptide is Carotenogenesis protein CarR (carR) (Myxococcus xanthus).